Consider the following 397-residue polypeptide: RNA binding protein fox-1 homolog 1 (397 aa).

Positions 1–121 (MNCEREQLRG…NKSQPKRLHV (121 aa)) are disordered. Residues 70–87 (QTHSEQSPADTSAQTVSG) are compositionally biased toward polar residues. Positions 88–99 (TATQTDDAAPTD) are enriched in low complexity. Over residues 100–113 (GQPQTQPSENTENK) the composition is skewed to polar residues. In terms of domain architecture, RRM spans 117-193 (KRLHVSNIPF…RKIEVNNATA (77 aa)). Arg-317 carries the post-translational modification Asymmetric dimethylarginine. Arg-388 is subject to Omega-N-methylarginine.

Binds to the C-terminus of ATXN2. As to expression, predominantly expressed in muscle and brain.

Its subcellular location is the nucleus. The protein resides in the cytoplasm. In terms of biological role, RNA-binding protein that regulates alternative splicing events by binding to 5'-UGCAUGU-3' elements. Regulates alternative splicing of tissue-specific exons and of differentially spliced exons during erythropoiesis. This Homo sapiens (Human) protein is RNA binding protein fox-1 homolog 1 (RBFOX1).